The chain runs to 824 residues: Silver exporting P-type ATPase (824 aa).

The disordered stretch occupies residues 89–112 (ASEHHHHHDHHEVSPDKIKQSHRQ). Residues 98 to 112 (HHEVSPDKIKQSHRQ) show a composition bias toward basic and acidic residues. 6 helical membrane-spanning segments follow: residues 167–187 (FWLG…SHLF), 200–220 (TWLQ…PFFA), 234–254 (FTLV…ATVF), 268–288 (LVAI…LGQV), 427–447 (WFVP…SVWG), and 455–475 (GLIA…GLAT). The active-site 4-aspartylphosphate intermediate is the D511. The next 2 membrane-spanning stretches (helical) occupy residues 764-784 (IRQN…VAAG) and 785-805 (LLYP…AMAL).

This sequence belongs to the cation transport ATPase (P-type) (TC 3.A.3) family. Type IB subfamily.

Its subcellular location is the cell membrane. It carries out the reaction Ag(+)(in) + ATP + H2O = Ag(+)(out) + ADP + phosphate + H(+). Functionally, component of the sil cation-efflux system that confers resistance to silver. The polypeptide is Silver exporting P-type ATPase (silP) (Salmonella typhimurium).